The primary structure comprises 118 residues: Co-chaperonin GroES (118 aa).

The protein belongs to the GroES chaperonin family. In terms of assembly, heptamer of 7 subunits arranged in a ring. Interacts with the chaperonin GroEL.

It is found in the cytoplasm. Its function is as follows. Together with the chaperonin GroEL, plays an essential role in assisting protein folding. The GroEL-GroES system forms a nano-cage that allows encapsulation of the non-native substrate proteins and provides a physical environment optimized to promote and accelerate protein folding. GroES binds to the apical surface of the GroEL ring, thereby capping the opening of the GroEL channel. In Helicobacter pylori (strain HPAG1), this protein is Co-chaperonin GroES.